The sequence spans 1904 residues: Fatty acid synthase beta subunit hexB (1904 aa).

The segment at 24 to 395 (LSVAFGGQGP…TEGTGVRVIQ (372 aa)) is acetyltransferase (AT) domain. Residues 447-691 (TQLLNAPPVM…LIVQTEGVGD (245 aa)) are enoyl reductase (ER) domain. Positions 1001–1491 (GPAADCWTHH…RPNDRLKIQL (491 aa)) are dehydratase (DH) domain. One can recognise a MaoC-like domain in the interval 1399-1512 (PGWNEGSTVL…MKVQAFNDET (114 aa)). Positions 1530-1893 (YVFCGQGSQE…IEHVQSVTGS (364 aa)) are malonyl/palmitoyl transferase (MT/PT) domain.

This sequence belongs to the fungal fatty acid synthetase subunit beta family. In terms of assembly, [Alpha(6)beta(6)] hexamers of two multifunctional subunits (alpha and beta).

It carries out the reaction acetyl-CoA + n malonyl-CoA + 2n NADPH + 4n H(+) = a long-chain-acyl-CoA + n CoA + n CO2 + 2n NADP(+).. The enzyme catalyses holo-[ACP] + acetyl-CoA = acetyl-[ACP] + CoA. It catalyses the reaction holo-[ACP] + malonyl-CoA = malonyl-[ACP] + CoA. The catalysed reaction is a (3R)-hydroxyacyl-[ACP] = a (2E)-enoyl-[ACP] + H2O. It carries out the reaction a 2,3-saturated acyl-[ACP] + NAD(+) = a (2E)-enoyl-[ACP] + NADH + H(+). The enzyme catalyses (9Z)-octadecenoyl-[ACP] + H2O = (9Z)-octadecenoate + holo-[ACP] + H(+). The protein operates within mycotoxin biosynthesis. Its function is as follows. Fatty acid synthase beta subunit; part of the fragmented gene cluster that mediates the biosynthesis of dothistromin (DOTH), a polyketide toxin very similar in structure to the aflatoxin precursor, versicolorin B. The first step of the pathway is the conversion of acetate to norsolorinic acid (NOR) and requires the fatty acid synthase subunits hexA and hexB, as well as the polyketide synthase pksA. PksA combines a hexanoyl starter unit and 7 malonyl-CoA extender units to synthesize the precursor NOR. The hexanoyl starter unit is provided to the acyl-carrier protein (ACP) domain by the fungal fatty acid synthase hexA/hexB. The second step is the conversion of NOR to averantin (AVN) and requires the norsolorinic acid ketoreductase nor1, which catalyzes the dehydration of norsolorinic acid to form (1'S)-averantin. The cytochrome P450 monooxygenase avnA then catalyzes the hydroxylation of AVN to 5'hydroxyaverantin (HAVN). The next step is performed by adhA that transforms HAVN to averufin (AVF). Averufin might then be converted to hydroxyversicolorone by cypX and avfA. Hydroxyversicolorone is further converted versiconal hemiacetal acetate (VHA) by moxY. VHA is then the substrate for the versiconal hemiacetal acetate esterase est1 to yield versiconal (VAL). Versicolorin B synthase vbsA then converts VAL to versicolorin B (VERB) by closing the bisfuran ring. Then, the activity of the versicolorin B desaturase verB leads to versicolorin A (VERA). DotB, a predicted chloroperoxidase, may perform epoxidation of the A-ring of VERA. Alternatively, a cytochrome P450, such as cypX or avnA could catalyze this step. It is also possible that another, uncharacterized, cytochrome P450 enzyme is responsible for this step. Opening of the epoxide could potentially be achieved by the epoxide hydrolase epoA. However, epoA seems not to be required for DOTH biosynthesis, but other epoxide hydrolases may have the ability to complement this hydrolysis. Alternatively, opening of the epoxide ring could be achieved non-enzymatically. The next step is the deoxygenation of ring A to yield the 5,8-dihydroxyanthraquinone which is most likely catalyzed by the NADPH dehydrogenase encoded by ver1. The last stages of DOTH biosynthesis are proposed to involve hydroxylation of the bisfuran. OrdB and norB might have oxidative roles here. An alternative possibility is that cytochrome P450 monoogenases such as avnA and cypX might perform these steps in addition to previously proposed steps. The chain is Fatty acid synthase beta subunit hexB from Dothistroma septosporum (strain NZE10 / CBS 128990) (Red band needle blight fungus).